We begin with the raw amino-acid sequence, 401 residues long: MTLHTSPILHSLLDTDAYKLHMQQAVYHHYYDVDVAAEFRCRGDELLGVYADEIAHQVDLMRFLSLNDDEFTYLSSLPFFKPDYLHWLRGFRFNPQQVSIKNNAGKLDIRITGPWREVILWEVPLLAVISEVVHRHRSPNVTAEQALVQLSASLESFRQHSADVDLSQFKLMDFGTRRRFSRDVQQTIVTALQADFPYLIGTSNYDLARRLDITPVGTQAHEWFQAHQQISPTLANSQRAALQMWLREYPSHLGIALTDCITMDAFLRDFDLPFAEAYQGLRHDSGDPVDWGEKAIAHYQRLNIDPMSKTLVFSDNLNLDKALALYRHFGQRVNLVFGIGTRLTCDIPGVKPLNIVIKLVECNGKPVAKLSDSPGKTICQDQNFVCELRKAFDLPRVKKAS.

Position 221 is a phosphohistidine; by autocatalysis (His-221).

This sequence belongs to the NAPRTase family. Post-translationally, transiently phosphorylated on a His residue during the reaction cycle. Phosphorylation strongly increases the affinity for substrates and increases the rate of nicotinate D-ribonucleotide production. Dephosphorylation regenerates the low-affinity form of the enzyme, leading to product release.

It carries out the reaction nicotinate + 5-phospho-alpha-D-ribose 1-diphosphate + ATP + H2O = nicotinate beta-D-ribonucleotide + ADP + phosphate + diphosphate. It participates in cofactor biosynthesis; NAD(+) biosynthesis; nicotinate D-ribonucleotide from nicotinate: step 1/1. Its function is as follows. Catalyzes the synthesis of beta-nicotinate D-ribonucleotide from nicotinate and 5-phospho-D-ribose 1-phosphate at the expense of ATP. The protein is Nicotinate phosphoribosyltransferase of Pectobacterium carotovorum subsp. carotovorum (strain PC1).